Here is a 179-residue protein sequence, read N- to C-terminus: ATP synthase subunit delta (179 aa).

The protein belongs to the ATPase delta chain family. As to quaternary structure, F-type ATPases have 2 components, F(1) - the catalytic core - and F(0) - the membrane proton channel. F(1) has five subunits: alpha(3), beta(3), gamma(1), delta(1), epsilon(1). F(0) has three main subunits: a(1), b(2) and c(10-14). The alpha and beta chains form an alternating ring which encloses part of the gamma chain. F(1) is attached to F(0) by a central stalk formed by the gamma and epsilon chains, while a peripheral stalk is formed by the delta and b chains.

The protein resides in the cell inner membrane. Its function is as follows. F(1)F(0) ATP synthase produces ATP from ADP in the presence of a proton or sodium gradient. F-type ATPases consist of two structural domains, F(1) containing the extramembraneous catalytic core and F(0) containing the membrane proton channel, linked together by a central stalk and a peripheral stalk. During catalysis, ATP synthesis in the catalytic domain of F(1) is coupled via a rotary mechanism of the central stalk subunits to proton translocation. This protein is part of the stalk that links CF(0) to CF(1). It either transmits conformational changes from CF(0) to CF(1) or is implicated in proton conduction. In Burkholderia lata (strain ATCC 17760 / DSM 23089 / LMG 22485 / NCIMB 9086 / R18194 / 383), this protein is ATP synthase subunit delta.